A 148-amino-acid chain; its full sequence is UPF0756 membrane protein NMA2160 (148 aa).

A run of 4 helical transmembrane segments spans residues 13–35 (LILL…LLLM), 50–70 (HGLN…LVSG), 80–100 (FLNF…WLAG), and 121–141 (VIGV…AGIL).

Belongs to the UPF0756 family.

It is found in the cell membrane. This chain is UPF0756 membrane protein NMA2160, found in Neisseria meningitidis serogroup A / serotype 4A (strain DSM 15465 / Z2491).